A 758-amino-acid polypeptide reads, in one-letter code: Polyribonucleotide nucleotidyltransferase (758 aa).

Mg(2+)-binding residues include D482 and D488. The region spanning 549 to 608 (PRVLSFYIDKDKISAAIGTKGKNIRSVCERSNAKIEIGDDGKVSVFAISSTEAEAAKNMM) is the KH domain. The region spanning 618 to 686 (GSIIDAKVVK…KGGCPKLSRR (69 aa)) is the S1 motif domain. The tract at residues 707-758 (DGLNNRDNYYNNSFNKKPEDNYHSNRPTRPRSGFSNRSRPKFGNNDSSSGFY) is disordered. Over residues 711–721 (NRDNYYNNSFN) the composition is skewed to low complexity.

The protein belongs to the polyribonucleotide nucleotidyltransferase family. Mg(2+) serves as cofactor.

The protein localises to the cytoplasm. It carries out the reaction RNA(n+1) + phosphate = RNA(n) + a ribonucleoside 5'-diphosphate. In terms of biological role, involved in mRNA degradation. Catalyzes the phosphorolysis of single-stranded polyribonucleotides processively in the 3'- to 5'-direction. This is Polyribonucleotide nucleotidyltransferase from Wolbachia pipientis subsp. Culex pipiens (strain wPip).